We begin with the raw amino-acid sequence, 284 residues long: Bifunctional protein FolD (284 aa).

Residues 166-168 (GAS) and Ile-232 each bind NADP(+).

The protein belongs to the tetrahydrofolate dehydrogenase/cyclohydrolase family. As to quaternary structure, homodimer.

The catalysed reaction is (6R)-5,10-methylene-5,6,7,8-tetrahydrofolate + NADP(+) = (6R)-5,10-methenyltetrahydrofolate + NADPH. It catalyses the reaction (6R)-5,10-methenyltetrahydrofolate + H2O = (6R)-10-formyltetrahydrofolate + H(+). It functions in the pathway one-carbon metabolism; tetrahydrofolate interconversion. Its function is as follows. Catalyzes the oxidation of 5,10-methylenetetrahydrofolate to 5,10-methenyltetrahydrofolate and then the hydrolysis of 5,10-methenyltetrahydrofolate to 10-formyltetrahydrofolate. The protein is Bifunctional protein FolD of Pseudomonas entomophila (strain L48).